A 249-amino-acid chain; its full sequence is Histone H1 (249 aa).

Low complexity-rich tracts occupy residues 1 to 19 (MSDSVVAVSASPVTPQTAS) and 27 to 43 (KKPASASASKAKKTTAP). 2 disordered regions span residues 1–53 (MSDS…QQMV) and 105–249 (QTKG…ATKK). The 75-residue stretch at 45–119 (THPPTQQMVD…GASGSFKLSA (75 aa)) folds into the H15 domain. The span at 121–134 (SKKEPKPKVSSVEK) shows a compositional bias: basic and acidic residues. The segment covering 146 to 158 (AKKKTISATKKPK) has biased composition (basic residues). Residues 173–190 (KSVDKKKAEKAKAKDAKK) show a composition bias toward basic and acidic residues. Residues 195–233 (KAKPTTAKAKSSAAKPKTPKPKTTSAKPKKVVAAASPKK) show a composition bias toward low complexity. The span at 234–249 (AAAKKPKAKTASATKK) shows a compositional bias: basic residues.

It belongs to the histone H1/H5 family.

It localises to the nucleus. It is found in the chromosome. Histones H1 are necessary for the condensation of nucleosome chains into higher-order structures. In Drosophila hydei (Fruit fly), this protein is Histone H1 (His1).